The sequence spans 1030 residues: Protein KRBA1 (1030 aa).

5 disordered regions span residues 27 to 56 (EPGRAVGGGSHADEGQEPAGCGDPQGGQPR), 80 to 208 (KGAM…NSPL), 225 to 255 (HPETSPSFLPPLPSLGTSRLTRADLGPGSPP), 281 to 505 (EAQD…GLEN), and 634 to 788 (GGPS…PASS). Phosphoserine is present on Ser101. Over residues 102–114 (PEAAAAREPCPLR) the composition is skewed to low complexity. A compositionally biased stretch (polar residues) spans 124-143 (PTSQPHLATTPTDSSCSSGP). A compositionally biased stretch (basic and acidic residues) spans 157 to 168 (TADKPWPTRKEG). Phosphoserine occurs at positions 177, 182, 184, 229, 253, and 355. The span at 372–389 (PEAQAASASSSPLEALEA) shows a compositional bias: low complexity. The span at 397–418 (NGSSPSQLPPTSCSQNPQPGDS) shows a compositional bias: polar residues. Basic and acidic residues predominate over residues 419 to 437 (RSQKPELQPHRSHSEEATR). Composition is skewed to low complexity over residues 485 to 502 (QGQHPGKGSPPGSSPLQG) and 642 to 651 (PGSSSSFSGS). The segment covering 654–674 (EDPRPEPDLWKPLPQERDRLP) has biased composition (basic and acidic residues). Positions 689-698 (TPAGSSGGSP) are enriched in gly residues. A compositionally biased stretch (pro residues) spans 760–784 (QGPPELPSESPPPELPPPEAAPPVL). Residues 799–832 (LQQELHSLGAALAEKLDRLATALAGLAQEVATMR) adopt a coiled-coil conformation. Positions 870 to 887 (RHLPYWRQKGPTRPKPKI) are enriched in basic residues. The tract at residues 870–1030 (RHLPYWRQKG…EHRDPRWGAH (161 aa)) is disordered. Residues 913–923 (PLPPDAPPAEP) show a composition bias toward pro residues. Low complexity-rich tracts occupy residues 929–953 (SSSQQLLSSTPSCHAAPPAHPLLAH) and 966–984 (PAALPLQGASPPAASADAD). The span at 1019-1030 (GGEHRDPRWGAH) shows a compositional bias: basic and acidic residues.

As to expression, expressed in brain (cerebellum).

The chain is Protein KRBA1 (KRBA1) from Homo sapiens (Human).